Consider the following 1411-residue polypeptide: DNA-directed RNA polymerase subunit beta' (1411 aa).

Cys-70, Cys-72, Cys-85, and Cys-88 together coordinate Zn(2+). Mg(2+)-binding residues include Asp-460, Asp-462, and Asp-464. Positions 814, 889, 896, and 899 each coordinate Zn(2+). Positions 1387-1399 are enriched in polar residues; sequence RSTSSGTEITSPS. A disordered region spans residues 1387 to 1411; sequence RSTSSGTEITSPSKDAIPLGSKVGF.

This sequence belongs to the RNA polymerase beta' chain family. In terms of assembly, the RNAP catalytic core consists of 2 alpha, 1 beta, 1 beta' and 1 omega subunit. When a sigma factor is associated with the core the holoenzyme is formed, which can initiate transcription. It depends on Mg(2+) as a cofactor. Zn(2+) serves as cofactor.

It catalyses the reaction RNA(n) + a ribonucleoside 5'-triphosphate = RNA(n+1) + diphosphate. Functionally, DNA-dependent RNA polymerase catalyzes the transcription of DNA into RNA using the four ribonucleoside triphosphates as substrates. This Xylella fastidiosa (strain M12) protein is DNA-directed RNA polymerase subunit beta'.